The following is a 611-amino-acid chain: Developmental and secondary metabolism regulator veA (611 aa).

Disordered regions lie at residues 1–57 (MNRK…RPVD), 222–497 (RRRE…ASFD), and 511–611 (LEAS…PGHA). Residues 14–23 (KSSATRTTND) show a composition bias toward polar residues. One can recognise a Velvet domain in the interval 24–216 (GRAITYEMQV…AEQGCRVRIR (193 aa)). A Nuclear localization signal motif is present at residues 38–43 (QRARAC). Residues 242 to 254 (AARARASATPDPS) show a composition bias toward low complexity. Residues 274 to 290 (SASNASHQSLGSISRRP) are compositionally biased toward polar residues. Residues 330-340 (YPPNQFVQQQP) show a composition bias toward low complexity. Pro residues predominate over residues 341–361 (PMQPPLPQYQPPNYPAPPPPV). Positions 362–377 (TAAQQPQPAQSYYNYP) are enriched in low complexity. The span at 419 to 434 (RNSQQIPPTSQPTAYT) shows a compositional bias: polar residues. Low complexity-rich tracts occupy residues 435–452 (QPMQPQYAAQMPPAQHYQ) and 461–471 (QASQHSSYSSM). The PEST stretch occupies residues 455 to 499 (PPPPPSQASQHSSYSSMDLYNSRPAPIEPHHHGNTPASKASFDLP). A compositionally biased stretch (polar residues) spans 511-533 (LEASSPTSVAPTNAYFSGGQTPI).

It belongs to the velvet family. VeA subfamily. As to quaternary structure, component of the heterotrimeric velvet complex composed of laeA, veA and velB; VeA acting as a bridging protein between laeA and velB.

The protein resides in the nucleus. Its subcellular location is the cytoplasm. In terms of biological role, component of the velvet transcription factor complex that controls sexual/asexual developmental ratio in response to light, promoting sexual development in the darkness while stimulating asexual sporulation under illumination. The velvet complex hat acts as a global regulator for secondary metabolite gene expression. Controls the expression of the dothistromin gene cluster. Regulates hyphal growth and pigment formation. Acts as a positive regulator of virulence. This chain is Developmental and secondary metabolism regulator veA, found in Dothistroma septosporum (strain NZE10 / CBS 128990) (Red band needle blight fungus).